Reading from the N-terminus, the 246-residue chain is 2-C-methyl-D-erythritol 4-phosphate cytidylyltransferase (246 aa).

Belongs to the IspD/TarI cytidylyltransferase family. IspD subfamily.

The catalysed reaction is 2-C-methyl-D-erythritol 4-phosphate + CTP + H(+) = 4-CDP-2-C-methyl-D-erythritol + diphosphate. It participates in isoprenoid biosynthesis; isopentenyl diphosphate biosynthesis via DXP pathway; isopentenyl diphosphate from 1-deoxy-D-xylulose 5-phosphate: step 2/6. Catalyzes the formation of 4-diphosphocytidyl-2-C-methyl-D-erythritol from CTP and 2-C-methyl-D-erythritol 4-phosphate (MEP). The chain is 2-C-methyl-D-erythritol 4-phosphate cytidylyltransferase from Chlorobaculum parvum (strain DSM 263 / NCIMB 8327) (Chlorobium vibrioforme subsp. thiosulfatophilum).